Reading from the N-terminus, the 256-residue chain is Ribonuclease HII (256 aa).

In terms of domain architecture, RNase H type-2 spans 67-255; it reads QLVGGVDEVG…VSEMVGLKKA (189 aa). A divalent metal cation-binding residues include D73, E74, and D165.

The protein belongs to the RNase HII family. Mn(2+) serves as cofactor. The cofactor is Mg(2+).

Its subcellular location is the cytoplasm. The catalysed reaction is Endonucleolytic cleavage to 5'-phosphomonoester.. Endonuclease that specifically degrades the RNA of RNA-DNA hybrids. In Lactobacillus delbrueckii subsp. bulgaricus (strain ATCC 11842 / DSM 20081 / BCRC 10696 / JCM 1002 / NBRC 13953 / NCIMB 11778 / NCTC 12712 / WDCM 00102 / Lb 14), this protein is Ribonuclease HII.